Reading from the N-terminus, the 1091-residue chain is Protein CTR9 homolog (1091 aa).

The residue at position 2 (alanine 2) is an N-acetylalanine. TPR repeat units follow at residues glycine 90–glutamate 127, proline 128–asparagine 161, proline 163–cysteine 195, alanine 197–asparagine 230, glutamate 232–cysteine 267, serine 305–asparagine 338, valine 343–asparagine 376, cysteine 377–aspartate 410, glutamine 412–glycine 443, isoleucine 449–isoleucine 482, isoleucine 558–asparagine 591, asparagine 593–lysine 625, alanine 640–asparagine 673, methionine 674–serine 707, proline 713–asparagine 746, and serine 749–asparagine 782. The disordered stretch occupies residues phenylalanine 919–asparagine 1091. The span at glutamate 951–lysine 965 shows a compositional bias: basic residues. Composition is skewed to acidic residues over residues aspartate 974–alanine 993, methionine 1003–alanine 1016, glutamate 1026–valine 1035, and asparagine 1080–asparagine 1091.

Component of the nuclear PAF1 complex (PAF1C), which consists of VIP2/ELF7/PAF1, VIP3/SKI8/WDR61, VIP4/LEO1, VIP5/RTF1, VIP6/ELF8/CTR9 and CDC73. Interacts with VIP3 and VIP4. As to expression, expressed in roots, leaves and shoot apex.

Its subcellular location is the nucleus. Component of the PAF1 complex (PAF1C) which is involved in histone modifications such as methylation on histone H3 'Lys-4' (H3K4me3). Involved in regulation of flowering time. Required for the expression of the MADS box genes and flowering repressors FLC, AGL27/FLM and AGL31/MAF2. Required for histone H3 trimethylation on 'Lys-4' H3K4me3 at the FLC and AGL27/FLM loci. Involved in the control of seed dormancy and germination. The protein is Protein CTR9 homolog of Arabidopsis thaliana (Mouse-ear cress).